The sequence spans 283 residues: Nickel/cobalt efflux system RcnA (283 aa).

At methionine 1 to asparagine 12 the chain is on the periplasmic side. The helical transmembrane segment at alanine 13–histidine 33 threads the bilayer. Residues serine 34 to glycine 56 are Cytoplasmic-facing. The chain crosses the membrane as a helical span at residues leucine 57–isoleucine 77. The Periplasmic portion of the chain corresponds to serine 78–alanine 86. The helical transmembrane segment at glutamate 87–tryptophan 107 threads the bilayer. Residues arginine 108–isoleucine 184 lie on the Cytoplasmic side of the membrane. Positions aspartate 127–histidine 162 are disordered. Composition is skewed to basic and acidic residues over residues glutamate 129–histidine 144 and glutamate 151–histidine 162. A helical transmembrane segment spans residues leucine 185 to isoleucine 205. Over cysteine 206–leucine 218 the chain is Periplasmic. The chain crosses the membrane as a helical span at residues valine 219–isoleucine 239. At serine 240–tyrosine 260 the chain is on the cytoplasmic side. Residues phenylalanine 261–isoleucine 281 traverse the membrane as a helical segment. Topologically, residues methionine 282–arginine 283 are periplasmic.

This sequence belongs to the NiCoT transporter (TC 2.A.52) family. RcnA subfamily.

It is found in the cell inner membrane. In terms of biological role, efflux system for nickel and cobalt. The sequence is that of Nickel/cobalt efflux system RcnA (rcnA) from Escherichia coli O157:H7.